A 934-amino-acid polypeptide reads, in one-letter code: Protein translocase subunit SecA (934 aa).

ATP contacts are provided by residues Gln-90, Gly-108–Thr-112, and Asp-509. Residues Pro-535–Gly-565 form a disordered region.

The protein belongs to the SecA family. As to quaternary structure, monomer and homodimer. Part of the essential Sec protein translocation apparatus which comprises SecA, SecYEG and auxiliary proteins SecDF. Other proteins may also be involved.

Its subcellular location is the cell inner membrane. The protein localises to the cellular thylakoid membrane. It localises to the cytoplasm. The enzyme catalyses ATP + H2O + cellular proteinSide 1 = ADP + phosphate + cellular proteinSide 2.. Functionally, part of the Sec protein translocase complex. Interacts with the SecYEG preprotein conducting channel. Has a central role in coupling the hydrolysis of ATP to the transfer of proteins into and across the cell membrane, serving as an ATP-driven molecular motor driving the stepwise translocation of polypeptide chains across the membrane. Probably participates in protein translocation into and across both the cytoplasmic and thylakoid membranes in cyanobacterial cells. This Synechococcus sp. (strain CC9605) protein is Protein translocase subunit SecA.